An 881-amino-acid polypeptide reads, in one-letter code: Nitrate reductase [NADH] 1 (881 aa).

The interval 1-46 (MAASVEHRPFTSHQHGVVRSFKSYPDVPRPKKLPLPQPLSDSTNDN) is disordered. Cysteine 167 contributes to the Mo-molybdopterin binding site. In terms of domain architecture, Cytochrome b5 heme-binding spans 515-590 (TKSYSLSEVR…LEDYRIGELM (76 aa)). Heme is bound by residues histidine 550 and histidine 573. The 113-residue stretch at 625–737 (REKIPCKLLS…KGPLGHIEYT (113 aa)) folds into the FAD-binding FR-type domain. FAD is bound by residues 677 to 680 (RAYT), 694 to 698 (VVKVY), phenylalanine 699, phenylalanine 706, 711 to 713 (IMS), and threonine 764.

The protein belongs to the nitrate reductase family. In terms of assembly, homodimer. It depends on FAD as a cofactor. Heme serves as cofactor. The cofactor is Mo-molybdopterin.

It catalyses the reaction nitrite + NAD(+) + H2O = nitrate + NADH + H(+). Nitrate reductase is a key enzyme involved in the first step of nitrate assimilation in plants, fungi and bacteria. In Phaseolus vulgaris (Kidney bean), this protein is Nitrate reductase [NADH] 1 (NIA1).